A 490-amino-acid polypeptide reads, in one-letter code: Betaine aldehyde dehydrogenase (490 aa).

K(+) is bound by residues Thr-26, Ile-27, and Asp-93. Gly-150–Trp-152 is a binding site for NAD(+). The Charge relay system role is filled by Lys-162. An NAD(+)-binding site is contributed by Lys-176–Glu-179. Position 180 (Val-180) interacts with K(+). Gly-230–Ser-233 serves as a coordination point for NAD(+). Leu-246 contributes to the K(+) binding site. Glu-252 functions as the Proton acceptor in the catalytic mechanism. The NAD(+) site is built by Gly-254, Cys-286, and Glu-387. Cys-286 functions as the Nucleophile in the catalytic mechanism. Residue Cys-286 is modified to Cysteine sulfenic acid (-SOH). Positions 457 and 460 each coordinate K(+). Glu-464 acts as the Charge relay system in catalysis.

It belongs to the aldehyde dehydrogenase family. As to quaternary structure, dimer of dimers. It depends on K(+) as a cofactor.

The catalysed reaction is betaine aldehyde + NAD(+) + H2O = glycine betaine + NADH + 2 H(+). Its pathway is amine and polyamine biosynthesis; betaine biosynthesis via choline pathway; betaine from betaine aldehyde: step 1/1. Involved in the biosynthesis of the osmoprotectant glycine betaine. Catalyzes the irreversible oxidation of betaine aldehyde to the corresponding acid. The chain is Betaine aldehyde dehydrogenase from Escherichia coli O6:H1 (strain CFT073 / ATCC 700928 / UPEC).